Here is a 568-residue protein sequence, read N- to C-terminus: Oxygen-dependent choline dehydrogenase (568 aa).

8 to 37 serves as a coordination point for FAD; it reads DYVIIGGGSAGSVLGNRLTEDKDKEVLVLE. Residue histidine 473 is the Proton acceptor of the active site.

Belongs to the GMC oxidoreductase family. Requires FAD as cofactor.

The enzyme catalyses choline + A = betaine aldehyde + AH2. It carries out the reaction betaine aldehyde + NAD(+) + H2O = glycine betaine + NADH + 2 H(+). The protein operates within amine and polyamine biosynthesis; betaine biosynthesis via choline pathway; betaine aldehyde from choline (cytochrome c reductase route): step 1/1. In terms of biological role, involved in the biosynthesis of the osmoprotectant glycine betaine. Catalyzes the oxidation of choline to betaine aldehyde and betaine aldehyde to glycine betaine at the same rate. This Staphylococcus haemolyticus (strain JCSC1435) protein is Oxygen-dependent choline dehydrogenase.